A 142-amino-acid polypeptide reads, in one-letter code: Cystatin-8 (142 aa).

The N-terminal stretch at 1 to 21 (MPRCRWLSLILLTIPLALVAR) is a signal peptide. N27 and N39 each carry an N-linked (GlcNAc...) asparagine glycan. Positions 77–81 (QVTNL) match the Secondary area of contact motif. Cystine bridges form between C95–C105 and C119–C139.

Belongs to the cystatin family. Proximal caput region of the epididymis. Lower expression in the testis. Within the testis it is localized to the elongating spermatids, whereas within the epididymis it is exclusively synthesized by the proximal caput epithelium.

The protein resides in the secreted. In terms of biological role, performs a specialized role during sperm development and maturation. In Homo sapiens (Human), this protein is Cystatin-8 (CST8).